A 515-amino-acid polypeptide reads, in one-letter code: Calcium-dependent protein kinase 2 (515 aa).

Residues 1–51 (MGNCCPGSGDAEPASSDASTGNGSSSFKAGASPSSAPAQNKPPAPIGPVLG) form a disordered region. Gly-2 carries N-myristoyl glycine lipidation. Residues 14 to 38 (ASSDASTGNGSSSFKAGASPSSAPA) are compositionally biased toward low complexity. A Protein kinase domain is found at 61–319 (YTIGKELGRG…AYEVLNHPWI (259 aa)). ATP contacts are provided by residues 67–75 (LGRGQFGVT) and Lys-90. Asp-185 serves as the catalytic Proton acceptor. The segment at 325-355 (APDTPLDNAVMNRLKQFRAMNQFKKAALRVI) is autoinhibitory domain. EF-hand domains follow at residues 362 to 397 (EEIRGLKEMFKSMDSDNSGTITVDELRKGLSKQGTK), 398 to 433 (LTEAEVQQLMEAADADGNGTIDYDEFITATMHMNRM), 434 to 469 (DREEHLYTAFQYFDKDNSGCISKEELEQALREKGLL), and 473 to 504 (DIKDIISEVDADNDGRIDYSEFAAMMRKGNPE). The Ca(2+) site is built by Asp-375, Asp-377, Ser-379, Thr-381, Glu-386, Asp-411, Asp-413, Asn-415, Thr-417, Glu-422, Asp-447, Asp-449, Ser-451, Cys-453, Glu-458, Asp-482, Asp-484, Asp-486, Arg-488, and Glu-493.

It belongs to the protein kinase superfamily. Ser/Thr protein kinase family. CDPK subfamily. As to expression, expressed in heading panicles, spikelets and mature pollen grains.

It localises to the membrane. The enzyme catalyses L-seryl-[protein] + ATP = O-phospho-L-seryl-[protein] + ADP + H(+). The catalysed reaction is L-threonyl-[protein] + ATP = O-phospho-L-threonyl-[protein] + ADP + H(+). Its activity is regulated as follows. Activated by calcium. Autophosphorylation may play an important role in the regulation of the kinase activity. Functionally, may play a role in signal transduction pathways that involve calcium as a second messenger. This is Calcium-dependent protein kinase 2 from Oryza sativa subsp. japonica (Rice).